The sequence spans 460 residues: tRNA-2-methylthio-N(6)-dimethylallyladenosine synthase (460 aa).

Residues 23-138 (RKVYVHTFGC…LPEMVARAER (116 aa)) form the MTTase N-terminal domain. [4Fe-4S] cluster-binding residues include C32, C68, C101, C176, C180, and C183. One can recognise a Radical SAM core domain in the interval 162–394 (ARGRPTAFVT…QAAQRRIAAA (233 aa)). The 64-residue stretch at 397 to 460 (AAELGKVVEV…GGSSLSGTPA (64 aa)) folds into the TRAM domain.

The protein belongs to the methylthiotransferase family. MiaB subfamily. In terms of assembly, monomer. It depends on [4Fe-4S] cluster as a cofactor.

It localises to the cytoplasm. It catalyses the reaction N(6)-dimethylallyladenosine(37) in tRNA + (sulfur carrier)-SH + AH2 + 2 S-adenosyl-L-methionine = 2-methylsulfanyl-N(6)-dimethylallyladenosine(37) in tRNA + (sulfur carrier)-H + 5'-deoxyadenosine + L-methionine + A + S-adenosyl-L-homocysteine + 2 H(+). Catalyzes the methylthiolation of N6-(dimethylallyl)adenosine (i(6)A), leading to the formation of 2-methylthio-N6-(dimethylallyl)adenosine (ms(2)i(6)A) at position 37 in tRNAs that read codons beginning with uridine. The polypeptide is tRNA-2-methylthio-N(6)-dimethylallyladenosine synthase (Anaeromyxobacter sp. (strain Fw109-5)).